The following is a 211-amino-acid chain: Protein-lysine N-methyltransferase DDB_G0272708 (211 aa).

It belongs to the class I-like SAM-binding methyltransferase superfamily. EFM5 family.

The protein localises to the cytoplasm. Functionally, S-adenosyl-L-methionine-dependent protein-lysine N-methyltransferase that methylates elongation factor 1-alpha. The sequence is that of Protein-lysine N-methyltransferase DDB_G0272708 from Dictyostelium discoideum (Social amoeba).